The primary structure comprises 240 residues: Large ribosomal subunit protein uL2 (240 aa).

The segment at 200–240 is disordered; sequence HPFGGGGRQHPGKPKSISRNAPPGRKVGDIASKRTGRGGNE.

Belongs to the universal ribosomal protein uL2 family. As to quaternary structure, part of the 50S ribosomal subunit. Forms a bridge to the 30S subunit in the 70S ribosome. Interacts weakly with protein L37Ae.

Its function is as follows. One of the primary rRNA binding proteins. Required for association of the 30S and 50S subunits to form the 70S ribosome, for tRNA binding and peptide bond formation. It has been suggested to have peptidyltransferase activity; this is somewhat controversial. Makes several contacts with the 16S rRNA in the 70S ribosome. The polypeptide is Large ribosomal subunit protein uL2 (rpl2) (Haloarcula marismortui (strain ATCC 43049 / DSM 3752 / JCM 8966 / VKM B-1809) (Halobacterium marismortui)).